Reading from the N-terminus, the 317-residue chain is HTH-type transcriptional repressor PA14_22550 (317 aa).

One can recognise an HTH lysR-type domain in the interval 1–59 (MDKLTAMATFVKVVDAGSFTRAADALGLPKARVSQRVSDLEKHLGVRLLNRTTRALSLT). Residues 19–38 (FTRAADALGLPKARVSQRVS) constitute a DNA-binding region (H-T-H motif).

It belongs to the LysR transcriptional regulatory family.

Represses the transcription of the operon that consists of PA14_22510 to PA14_22540. In Pseudomonas aeruginosa (strain UCBPP-PA14), this protein is HTH-type transcriptional repressor PA14_22550.